Here is a 374-residue protein sequence, read N- to C-terminus: Phospho-N-acetylmuramoyl-pentapeptide-transferase (374 aa).

Helical transmembrane passes span 3–23, 52–72, 85–105, 125–145, 170–190, 201–221, 244–264, 271–291, 294–314, and 350–370; these read AVIVAVGVAFLVSLFCTPIAI, MGGVVFILATVIAYVAGHLAL, PTITALVLLGLMVFSGAVGFI, LLGQILVGAVFGVIALYFPST, IPALELTKVGAVVLFIFVVMA, LDGLATGASVMVLAAYALIAF, PLEIALIAGAAAGACVGFLWW, IFMGDTGALGLGGLIAGMAMS, TILLLPIIGGLFVIITMSVVI, and FWIIAGIGVAIALGLFYSEFL.

The protein belongs to the glycosyltransferase 4 family. MraY subfamily. Mg(2+) serves as cofactor.

Its subcellular location is the cell membrane. It catalyses the reaction UDP-N-acetyl-alpha-D-muramoyl-L-alanyl-gamma-D-glutamyl-meso-2,6-diaminopimeloyl-D-alanyl-D-alanine + di-trans,octa-cis-undecaprenyl phosphate = di-trans,octa-cis-undecaprenyl diphospho-N-acetyl-alpha-D-muramoyl-L-alanyl-D-glutamyl-meso-2,6-diaminopimeloyl-D-alanyl-D-alanine + UMP. It functions in the pathway cell wall biogenesis; peptidoglycan biosynthesis. Functionally, catalyzes the initial step of the lipid cycle reactions in the biosynthesis of the cell wall peptidoglycan: transfers peptidoglycan precursor phospho-MurNAc-pentapeptide from UDP-MurNAc-pentapeptide onto the lipid carrier undecaprenyl phosphate, yielding undecaprenyl-pyrophosphoryl-MurNAc-pentapeptide, known as lipid I. This Salinispora arenicola (strain CNS-205) protein is Phospho-N-acetylmuramoyl-pentapeptide-transferase.